Consider the following 479-residue polypeptide: Transcript termination protein A18 (479 aa).

The region spanning 99–255 (KNKHKRPTYI…NDIINVSNSL (157 aa)) is the Helicase ATP-binding domain. 112–119 (LACGFGKT) provides a ligand contact to ATP. Residues 205-208 (DESH) carry the DESH box motif. The Helicase C-terminal domain maps to 308 to 469 (ILDTIIYDFN…EKKGKKKELA (162 aa)).

The protein belongs to the helicase family. Poxviruses subfamily. As to quaternary structure, interacts with G2. Might be part of a transcription complex composed at least of G2, A18, and H5.

The protein localises to the virion. Its function is as follows. DNA helicase which seems to act as a postreplicative transcription termination factor. Involved in ATP-dependent release of nascent RNA. Forms a stable complex with single-stranded DNA, and to a lesser extent RNA. This chain is Transcript termination protein A18, found in Homo sapiens (Human).